The chain runs to 347 residues: MKMDERKQQILLAIIKDYINTAEPVGSRTISRKYKLGVSPATIRNEMSDLEEMGYIEQPHTSAGRIPSNLGYRYYVDCLMQREQLSEEEEVTIRRGYENKVREVGEVLNRTGRMMAQLTHYTALVQMPSFRRSAYKHVQMVLMGPSQAILIVVMDTGAVHHQMMTVPESITQQDLDQISSVLNAKLQGRTMDNIRLTLIKEIYFELSKHRSILDLALELMQDRVISVAEDKIYLEGVFNILNQPEFHNVERVKILLSLLEQEDTLKDILDFTRDRQGITIKIGNENLRQEIQDCSMVTATYQVGDKILGTIGVLGPTRMDYARVVTVIDCMSRNLSRTLDRILKGQV.

It belongs to the HrcA family.

In terms of biological role, negative regulator of class I heat shock genes (grpE-dnaK-dnaJ and groELS operons). Prevents heat-shock induction of these operons. The sequence is that of Heat-inducible transcription repressor HrcA from Desulforamulus reducens (strain ATCC BAA-1160 / DSM 100696 / MI-1) (Desulfotomaculum reducens).